A 234-amino-acid polypeptide reads, in one-letter code: Endo-1,4-beta-xylanase 1 (234 aa).

A signal peptide spans 1-21 (MVSFIFTRIILFAAAINGAVA). 2 N-linked (GlcNAc...) asparagine glycosylation sites follow: asparagine 25 and asparagine 75. One can recognise a GH11 domain in the interval 38–234 (SGTPSSTGYS…SSGFSSITVA (197 aa)). Glutamate 124 (nucleophile) is an active-site residue. The N-linked (GlcNAc...) asparagine glycan is linked to asparagine 167. Glutamate 221 functions as the Proton donor in the catalytic mechanism.

Belongs to the glycosyl hydrolase 11 (cellulase G) family.

The protein resides in the secreted. The enzyme catalyses Endohydrolysis of (1-&gt;4)-beta-D-xylosidic linkages in xylans.. It functions in the pathway glycan degradation; xylan degradation. In terms of biological role, endo-1,4-beta-xylanase involved in the hydrolysis of xylan, a major structural heterogeneous polysaccharide found in plant biomass representing the second most abundant polysaccharide in the biosphere, after cellulose. The sequence is that of Endo-1,4-beta-xylanase 1 (Xyn1) from Leucoagaricus gongylophorus (Leaf-cutting ant fungus).